The following is a 278-amino-acid chain: Large ribosomal subunit protein uL2 (278 aa).

The interval Val224 to Arg262 is disordered.

The protein belongs to the universal ribosomal protein uL2 family. Part of the 50S ribosomal subunit. Forms a bridge to the 30S subunit in the 70S ribosome.

Functionally, one of the primary rRNA binding proteins. Required for association of the 30S and 50S subunits to form the 70S ribosome, for tRNA binding and peptide bond formation. It has been suggested to have peptidyltransferase activity; this is somewhat controversial. Makes several contacts with the 16S rRNA in the 70S ribosome. The sequence is that of Large ribosomal subunit protein uL2 from Leptospira biflexa serovar Patoc (strain Patoc 1 / Ames).